The primary structure comprises 423 residues: MYDTSLTLTEFDPELADAILHEEDRQETHVELIASENYASPLVMAIQNSVFTNKYAEGYLGKRYYSGCEYVDVAERLAIERAKVLFDCDYANVQPHAGAQANAAVFLALTNPGDTVMGMNLAQGGHLTHGNPSNFSGRHYKIVPYGLDSETGLIDYDEMERIALETRPKMLIGGFSAYSRHKDWARMRTIADKVGAIFWVDMAHVAGLVAAGEYPNPLPQAHVVTSTTHKTLRGPRGGIILAKGQSEDFYKKLNAAVFPGIQGGPLMHVIAAKAVAFKEALRPEFTVYQRQVVANARAMARIIQQRGYKIVSDGTDNHLLLIDLSAKPYTGKDADAALSDAYITTNKNSVPNDPRSPFVTSGLRIGTPAVTTRGFGVTECEQLAGWLCDVLDGLGAGNEELTVIRDRVREQVVALCHRYPVYQ.

Residues L121 and 125-127 (GHL) each bind (6S)-5,6,7,8-tetrahydrofolate. Residue K230 is modified to N6-(pyridoxal phosphate)lysine. 356–358 (SPF) provides a ligand contact to (6S)-5,6,7,8-tetrahydrofolate.

Belongs to the SHMT family. In terms of assembly, homodimer. Pyridoxal 5'-phosphate is required as a cofactor.

Its subcellular location is the cytoplasm. The catalysed reaction is (6R)-5,10-methylene-5,6,7,8-tetrahydrofolate + glycine + H2O = (6S)-5,6,7,8-tetrahydrofolate + L-serine. It functions in the pathway one-carbon metabolism; tetrahydrofolate interconversion. Its pathway is amino-acid biosynthesis; glycine biosynthesis; glycine from L-serine: step 1/1. In terms of biological role, catalyzes the reversible interconversion of serine and glycine with tetrahydrofolate (THF) serving as the one-carbon carrier. This reaction serves as the major source of one-carbon groups required for the biosynthesis of purines, thymidylate, methionine, and other important biomolecules. Also exhibits THF-independent aldolase activity toward beta-hydroxyamino acids, producing glycine and aldehydes, via a retro-aldol mechanism. In Pectobacterium atrosepticum (strain SCRI 1043 / ATCC BAA-672) (Erwinia carotovora subsp. atroseptica), this protein is Serine hydroxymethyltransferase 2.